Here is a 1100-residue protein sequence, read N- to C-terminus: Beta-alanine-activating enzyme (1100 aa).

The segment at 162–181 (HKVTDREDRVSAESRTPEKE) is disordered. Residues 197 to 205 (TSGTTGTPK), Asp427, Arg441, and Lys526 contribute to the ATP site. A Carrier domain is found at 552 to 632 (EELWGKLQYL…DVYNHIVQAV (81 aa)). The residue at position 591 (Ser591) is an O-(pantetheine 4'-phosphoryl)serine. The disordered stretch occupies residues 643-671 (SYTTKRKFSDADPEEASGKPARLESAWPS). Ser651 is modified (phosphoserine).

It belongs to the ATP-dependent AMP-binding enzyme family.

Functionally, covalently binds beta-alanine in an ATP-dependent manner to form a thioester bond with its phosphopantetheine group and transfers it to an as yet unknown acceptor via an amide bond. May be required for a post-translational protein modification or for post-transcriptional modification of an RNA. In Mus musculus (Mouse), this protein is Beta-alanine-activating enzyme (Aasdh).